Consider the following 617-residue polypeptide: MPKYRSFKTTHGKNMSGARSLWRATGMNDEDFKKPIIAIVNSFSQFVPGHIHLKKVGELISDQIQKSGGVPKEFNTIAIDDGIAMGHSGMLYSLPSRELIADSIEYVINAHCVDAMICVSNCDKITPGMLMAALRLNIPSVFISGGPMEAGKIRKNEKEIKIDLVDAIMIGGQSNQCKNFIKEVELLACPTCGSCSGMFTANSMNCLTEAIGLSLPGNGTLLATHVDRKNLFIKSAKTIVKITKEYYHHNNKKVLPRSIASKESFENAMILDIAMGGSTNTILHLLAAAQEAEIDFNMSNIDELSRKIPHICKVSPSTSLYHMEDVHRAGGVMGILGELNRANLLNKQTQNILQLNLEETLKEYDIVLSKNPDILKMFKAKPAGIRTIQPYSQENRWLTLDYDRKTGCIRSCKNAYSQDGGLAVLYGNLAKNGCIIKTAGIKKSNYIFSGPARVYESQEEAVNAILKGEIISGDIVVIRYEGPKGGPGMQEMLYPTTYLKSMKLDKTCALITDGRFSGGTSGLSIGHVSPEAANKGVIALVKNGDIINIDITQRVINLNITEQELQQRIFQEESKKSLSYKPLNRKRHISYALKTYAFFAMSADKGAVRDRQKLSKI.

Asp81 is a binding site for Mg(2+). Cys122 provides a ligand contact to [2Fe-2S] cluster. Positions 123 and 124 each coordinate Mg(2+). At Lys124 the chain carries N6-carboxylysine. Residue Cys195 participates in [2Fe-2S] cluster binding. Glu491 contributes to the Mg(2+) binding site. Ser517 functions as the Proton acceptor in the catalytic mechanism.

This sequence belongs to the IlvD/Edd family. In terms of assembly, homodimer. [2Fe-2S] cluster is required as a cofactor. Requires Mg(2+) as cofactor.

It carries out the reaction (2R)-2,3-dihydroxy-3-methylbutanoate = 3-methyl-2-oxobutanoate + H2O. The catalysed reaction is (2R,3R)-2,3-dihydroxy-3-methylpentanoate = (S)-3-methyl-2-oxopentanoate + H2O. It functions in the pathway amino-acid biosynthesis; L-isoleucine biosynthesis; L-isoleucine from 2-oxobutanoate: step 3/4. Its pathway is amino-acid biosynthesis; L-valine biosynthesis; L-valine from pyruvate: step 3/4. Functionally, functions in the biosynthesis of branched-chain amino acids. Catalyzes the dehydration of (2R,3R)-2,3-dihydroxy-3-methylpentanoate (2,3-dihydroxy-3-methylvalerate) into 2-oxo-3-methylpentanoate (2-oxo-3-methylvalerate) and of (2R)-2,3-dihydroxy-3-methylbutanoate (2,3-dihydroxyisovalerate) into 2-oxo-3-methylbutanoate (2-oxoisovalerate), the penultimate precursor to L-isoleucine and L-valine, respectively. The chain is Dihydroxy-acid dehydratase from Buchnera aphidicola subsp. Diuraphis noxia.